The primary structure comprises 138 residues: Large ribosomal subunit protein uL16 (138 aa).

Belongs to the universal ribosomal protein uL16 family. In terms of assembly, part of the 50S ribosomal subunit.

Functionally, binds 23S rRNA and is also seen to make contacts with the A and possibly P site tRNAs. In Chlamydia caviae (strain ATCC VR-813 / DSM 19441 / 03DC25 / GPIC) (Chlamydophila caviae), this protein is Large ribosomal subunit protein uL16.